Here is a 1012-residue protein sequence, read N- to C-terminus: Autotransporter adhesin BpaC (1012 aa).

The first 71 residues, 1-71, serve as a signal peptide directing secretion; the sequence is MNRIFKSIWC…PFAEEAMAAN (71 aa). Residues 72–921 are surface exposed passenger domain; the sequence is NAGVCLTYNG…VGQLNSAVSG (850 aa). 2 disordered regions span residues 420–746 and 785–809; these read GLQG…AGAT and ENST…ESAA. Over residues 427–442 the composition is skewed to polar residues; the sequence is ANTGTASGDNSTASGD. The span at 443 to 504 shows a compositional bias: low complexity; the sequence is NATASGTNST…ANGTNSTASG (62 aa). Over residues 505–519 the composition is skewed to polar residues; the sequence is DNSTASGTNASATGE. Over residues 520–588 the composition is skewed to low complexity; it reads NSTATGTDST…ANGTNSTASG (69 aa). Residues 589 to 603 show a composition bias toward polar residues; sequence DNSTASGTNASATGE. Residues 604 to 630 are compositionally biased toward low complexity; that stretch reads NSTATGTDSTASGSNSTANGTNSTASG. Positions 631 to 645 are enriched in polar residues; the sequence is DNSTASGTNASATGE. Composition is skewed to low complexity over residues 646–700 and 708–746; these read NSTA…TASG and TNAS…AGAT. Positions 922 to 959 are outer membrane translocation of the passenger domain; the sequence is IRNQMDGMQGQIDTLARDAYSGIAAATALTMIPDVDPG. The tract at residues 960–1012 is translocator domain; sequence KTLAVGIGTANFKGYQASALGATARITQNLKVKTGVSYSGSNYVWGAGMSYQW.

The protein belongs to the autotransporter-2 (AT-2) (TC 1.B.40) family. As to quaternary structure, homotrimer.

It localises to the cell surface. Its subcellular location is the cell outer membrane. Functionally, involved in virulence. Mediates adherence to human respiratory epithelial cells. In Burkholderia mallei (strain ATCC 23344), this protein is Autotransporter adhesin BpaC.